Consider the following 164-residue polypeptide: 2S albumin seed storage protein PINP1 (164 aa).

An N-terminal signal peptide occupies residues 1 to 29 (MGVFSSPMSTLRWVTLFAALLSLLEWGTA). Positions 92-107 (DQSQSYDSSTDSDSQD) are enriched in low complexity. Residues 92 to 137 (DQSQSYDSSTDSDSQDGAPLNQRRRRRGEGRGREEEEAVERAEELP) form a disordered region. Residues 120 to 137 (EGRGREEEEAVERAEELP) are compositionally biased toward basic and acidic residues. A glycan (N-linked (GalNAc...) asparagine) is linked at Asn138.

Belongs to the 2S seed storage albumins family.

In Pinus pinea (Italian stone pine), this protein is 2S albumin seed storage protein PINP1.